The sequence spans 64 residues: Temporin-ALe (64 aa).

A signal peptide spans 1–22 (MFTLKKSLLLLFFLGTINLSLC). A propeptide spanning residues 23 to 47 (EQERNAEEERRDEPDERNAEVEKRF) is cleaved from the precursor. L62 carries the post-translational modification Leucine amide.

In terms of tissue distribution, expressed by the skin glands.

Its subcellular location is the secreted. Antimicrobial peptide with activity against Gram-positive and Gram-negative bacteria and against fungi. Has been tested against S.aureus (MIC=1.25 ug/mL), B.pumilus (MIC=5.0 ug/mL), B.cereus (MIC=15.0 ug/mL), E.coli (MIC=1.25 ug/mL), B.dysenteriae (MIC=5.0 ug/mL), A.cacoaceticus (MIC=15.0 ug/mL), P.aeruginosa (MIC=5.0 ug/mL) and C.albicans (MIC=1.25 ug/mL). Also shows a weak hemolytic activity. In Amolops loloensis (Lolokou Sucker Frog), this protein is Temporin-ALe.